The chain runs to 444 residues: 23S rRNA (uracil(1939)-C(5))-methyltransferase RlmD (444 aa).

Residues 11 to 70 (NSIKNHILKNIKVEKLDHRGRGLAYFQNKPLFIDGALAGELLEVQIVESKKRYSKGKIKK) form the TRAM domain. The [4Fe-4S] cluster site is built by C83, C89, C92, and C171. Positions 277, 306, 311, 327, 354, and 376 each coordinate S-adenosyl-L-methionine. The Nucleophile role is filled by C402.

Belongs to the class I-like SAM-binding methyltransferase superfamily. RNA M5U methyltransferase family. RlmD subfamily.

It catalyses the reaction uridine(1939) in 23S rRNA + S-adenosyl-L-methionine = 5-methyluridine(1939) in 23S rRNA + S-adenosyl-L-homocysteine + H(+). Its function is as follows. Catalyzes the formation of 5-methyl-uridine at position 1939 (m5U1939) in 23S rRNA. The protein is 23S rRNA (uracil(1939)-C(5))-methyltransferase RlmD of Psychromonas ingrahamii (strain DSM 17664 / CCUG 51855 / 37).